Consider the following 274-residue polypeptide: Rhamnulose-1-phosphate aldolase (274 aa).

The active site involves Glu-117. The Zn(2+) site is built by His-141, His-143, and His-212.

This sequence belongs to the aldolase class II family. RhaD subfamily. As to quaternary structure, homotetramer. The cofactor is Zn(2+).

The protein localises to the cytoplasm. The enzyme catalyses L-rhamnulose 1-phosphate = (S)-lactaldehyde + dihydroxyacetone phosphate. It participates in carbohydrate degradation; L-rhamnose degradation; glycerone phosphate from L-rhamnose: step 3/3. Catalyzes the reversible cleavage of L-rhamnulose-1-phosphate to dihydroxyacetone phosphate (DHAP) and L-lactaldehyde. This is Rhamnulose-1-phosphate aldolase from Escherichia coli (strain SMS-3-5 / SECEC).